Consider the following 108-residue polypeptide: Ig kappa chain V-V region HP 124E1 (108 aa).

Residues 1–23 (DIQMTQTTSSLSASLGDRVTISC) form a framework-1 region. Residues cysteine 23 and cysteine 88 are joined by a disulfide bond. The complementarity-determining-1 stretch occupies residues 24–34 (RASQDINNYLN). Residues 35 to 49 (WYQQKPDGTVKLLIY) are framework-2. A complementarity-determining-2 region spans residues 50–56 (YTSRLHS). The tract at residues 57–88 (GVPSRFSGSGSGTDYSLTISNLEQEDIATYFC) is framework-3. The tract at residues 89 to 97 (QQGKTLPRT) is complementarity-determining-3. Residues 98 to 108 (FGGGTKLEIKR) are framework-4.

The protein is Ig kappa chain V-V region HP 124E1 of Mus musculus (Mouse).